The primary structure comprises 475 residues: F-box protein At3g59150 (475 aa).

Positions 12-58 constitute an F-box domain; the sequence is GDVISNLPNDLLCRILSYLSTKEAALTSILSKRWSNLLLSIPILDFD.

The polypeptide is F-box protein At3g59150 (Arabidopsis thaliana (Mouse-ear cress)).